The following is a 1052-amino-acid chain: SWI/SNF-related matrix-associated actin-dependent regulator of chromatin subfamily A member 5 (1052 aa).

The segment covering 1 to 15 (MSSAAEPPPPPPPES) has biased composition (pro residues). Residues 1-83 (MSSAAEPPPP…QEPDPTYEEK (83 aa)) form a disordered region. N-acetylserine is present on S2. Residues 16–55 (APSKPAASIASGGSNSSNKGGPEGVAAQAVASAASAGPAD) are compositionally biased toward low complexity. S66 is modified (phosphoserine). Residues 69 to 83 (KQKEIQEPDPTYEEK) show a composition bias toward basic and acidic residues. K83 is covalently cross-linked (Glycyl lysine isopeptide (Lys-Gly) (interchain with G-Cter in SUMO2)). A Phosphothreonine modification is found at T113. A phosphoserine mark is found at S116, S137, and S171. Positions 192 to 357 (ISLYENGING…WSLLNFLLPD (166 aa)) constitute a Helicase ATP-binding domain. Position 205–212 (205–212 (DEMGLGKT)) interacts with ATP. Positions 308–311 (DEAH) match the DEAH box motif. The residue at position 440 (K440) is an N6-acetyllysine. A Helicase C-terminal domain is found at 487–638 (VLDKLLPKLK…SIVIQQGRLV (152 aa)). Residues K644, K647, K694, K722, and K735 each participate in a glycyl lysine isopeptide (Lys-Gly) (interchain with G-Cter in SUMO2) cross-link. Residues S755 and S825 each carry the phosphoserine modification. 2 consecutive SANT domains span residues 840 to 892 (QGFT…ERCN) and 943 to 1007 (KGKN…LITL). K966 participates in a covalent cross-link: Glycyl lysine isopeptide (Lys-Gly) (interchain with G-Cter in SUMO2). Residues 1015-1052 (LEEKEKAEKKKRGPKPSTQKRKMDGAPDGRGRKKKLKL) form a disordered region. Residues 1023-1034 (KKKRGPKPSTQK) are compositionally biased toward basic residues. Positions 1035 to 1044 (RKMDGAPDGR) are enriched in basic and acidic residues.

This sequence belongs to the SNF2/RAD54 helicase family. ISWI subfamily. Component of the ACF-5 ISWI chromatin-remodeling complex (also called the ACF/WCRF complex) at least composed of SMARCA5/SNF2H and BAZ1A/ACF1, which regulates the spacing of histone octamers on the DNA template to facilitate access to DNA. Within the complex interacts with BAZ1A/ACF1; the interaction is direct and is required to slide nucleosomes from end to center positions on a DNA template in an ATP-dependent manner. Component of the CHRAC ISWI chromatin-remodeling complex at least composed of SMARCA5/SNF2H, BAZ1A/ACF1, CHRAC1 and POLE3; the complex preferentially binds DNA through the CHRAC1-POLE3 heterodimer and possesses ATP-dependent nucleosome-remodeling activity. Within the complex interacts with BAZ1A/ACF1; the interaction is direct and promotes the interaction with the POLE3-CHRAC1 heterodimer. Within the complex interacts with the POLE3-CHRAC1 heterodimer; the interaction is direct and enhances nucleosome sliding activity by the SMARCA5/SNF2H and BAZ1A/ACF1 interaction. Neither POLE3 nor CHRAC1 enhances nucleosome sliding activity of the ACF-5 ISWI chromatin remodeling complex. Component of the WICH-5 ISWI chromatin-remodeling complex (also called the WICH complex) at least composed of SMARCA5/SNF2H and BAZ1B/WSTF, which regulates the spacing of histone octamers on the DNA template to facilitate access to DNA. Within the complex interacts with BAZ1B/WSTF. Component of the NoRC-5 ISWI chromatin-remodeling complex (also called the NoRC chromatin-remodeling complex) at least composed of SMARCA5/SNF2H and BAZ2A/TIP5; the complex suppresses rDNA transcription by a combination of nucleosome remodeling, histone deacetylation, and DNA methylation. Within the complex interacts with BAZ2A/TIP5. Within the complex interacts with HDAC1. Component of the BRF-5 ISWI chromatin-remodeling complex at least composed of SMARCA5/SNF2H and BAZ2B. Within the complex interacts with BAZ2B. Component of the NURF-5 ISWI chromatin-remodeling complex at least composed of SMARCA5/SNF2H and BPTF. Within the complex interacts with BPFT. Component of the CERF-5 ISWI chromatin-remodeling complex at least composed of SMARCA5/SNF2H and CECR2. LUZP1 is detected as part of the CERF-5 complex in embryonic stem cells where it is involved in complex stabilization but is not detected in the complex in the testis. Within the complex interacts with CECR2. Component of the RSF-5 ISWI chromatin-remodeling complex (also called the RSF complex) at least composed of SMARCA5/SNF2H and RSF1. Within the complex interacts with RSF1. Interacts with the cohesin complex component RAD21; the interaction is direct. Interacts with the NuRD complex components HDAC2, RBBP4 and CHD4; the interactions are direct. Interacts with PCNA. Component of the B-WICH complex, at least composed of SMARCA5/SNF2H, BAZ1B/WSTF, SF3B1, DEK, MYO1C, ERCC6, MYBBP1A and DDX21 which positively regulates RNA polymerase III transcription. Interacts with MYO1C. Interacts with BEND3. Interacts with SIRT6; promoting recruitment to DNA damage sites. As to quaternary structure, (Microbial infection) Interacts with JC virus small t antigen. In terms of assembly, (Microbial infection) Interacts with Epstein Barr virus (EBV) lytic switch protein BZLF1; this interaction participates to the activation of early lytic viral genes by BZLF1. Ubiquitously expressed.

The protein resides in the nucleus. It is found in the chromosome. It carries out the reaction ATP + H2O = ADP + phosphate + H(+). Functionally, ATPase that possesses intrinsic ATP-dependent nucleosome-remodeling activity. Catalytic subunit of ISWI chromatin-remodeling complexes, which form ordered nucleosome arrays on chromatin and facilitate access to DNA during DNA-templated processes such as DNA replication, transcription, and repair; this may require intact histone H4 tails. Within the ISWI chromatin-remodeling complexes, slides edge- and center-positioned histone octamers away from their original location on the DNA template. Catalytic activity and histone octamer sliding propensity is regulated and determined by components of the ISWI chromatin-remodeling complexes. The BAZ1A/ACF1-, BAZ1B/WSTF-, BAZ2A/TIP5- and BAZ2B-containing ISWI chromatin-remodeling complexes regulate the spacing of nucleosomes along the chromatin and have the ability to slide mononucleosomes to the center of a DNA template in an ATP-dependent manner. The CECR2- and RSF1-containing ISWI chromatin-remodeling complexes do not have the ability to slide mononucleosomes to the center of a DNA template. Binds to core histones together with RSF1, and is required for the assembly of regular nucleosome arrays by the RSF-5 ISWI chromatin-remodeling complex. Involved in DNA replication and together with BAZ1A/ACF1 is required for replication of pericentric heterochromatin in S-phase. Probably plays a role in repression of RNA polymerase I dependent transcription of the rDNA locus, through the recruitment of the SIN3/HDAC1 corepressor complex to the rDNA promoter. Essential component of the WICH-5 ISWI chromatin-remodeling complex (also called the WICH complex), a chromatin-remodeling complex that mobilizes nucleosomes and reconfigures irregular chromatin to a regular nucleosomal array structure. The WICH-5 ISWI chromatin-remodeling complex regulates the transcription of various genes, has a role in RNA polymerase I transcription. Within the B-WICH complex has a role in RNA polymerase III transcription. Mediates the histone H2AX phosphorylation at 'Tyr-142', and is involved in the maintenance of chromatin structures during DNA replication processes. Essential component of NoRC-5 ISWI chromatin-remodeling complex, a complex that mediates silencing of a fraction of rDNA by recruiting histone-modifying enzymes and DNA methyltransferases, leading to heterochromatin formation and transcriptional silencing. The sequence is that of SWI/SNF-related matrix-associated actin-dependent regulator of chromatin subfamily A member 5 from Homo sapiens (Human).